Reading from the N-terminus, the 297-residue chain is Protein-L-isoaspartate O-methyltransferase (297 aa).

The disordered stretch occupies residues 20 to 57; that stretch reads RKPAPARTAGMPAVGAPGPAQAQAKARDKQPSAPTAAA. Residues 28–43 are compositionally biased toward low complexity; sequence AGMPAVGAPGPAQAQA. The active site involves Ser-133.

The protein belongs to the methyltransferase superfamily. L-isoaspartyl/D-aspartyl protein methyltransferase family.

It localises to the cytoplasm. The catalysed reaction is [protein]-L-isoaspartate + S-adenosyl-L-methionine = [protein]-L-isoaspartate alpha-methyl ester + S-adenosyl-L-homocysteine. Its function is as follows. Catalyzes the methyl esterification of L-isoaspartyl residues in peptides and proteins that result from spontaneous decomposition of normal L-aspartyl and L-asparaginyl residues. It plays a role in the repair and/or degradation of damaged proteins. This is Protein-L-isoaspartate O-methyltransferase from Cupriavidus pinatubonensis (strain JMP 134 / LMG 1197) (Cupriavidus necator (strain JMP 134)).